A 322-amino-acid polypeptide reads, in one-letter code: HPr kinase/phosphorylase (322 aa).

Residues H146 and K167 contribute to the active site. An ATP-binding site is contributed by 161–168 (GDSGLGKS). Position 168 (S168) interacts with Mg(2+). The active-site Proton acceptor; for phosphorylation activity. Proton donor; for dephosphorylation activity is the D185. The tract at residues 209–218 (LEVRGLGLLD) is important for the catalytic mechanism of both phosphorylation and dephosphorylation. Residue E210 participates in Mg(2+) binding. The active site involves R250. The important for the catalytic mechanism of dephosphorylation stretch occupies residues 271–276 (QVAAGR).

This sequence belongs to the HPrK/P family. In terms of assembly, homohexamer. The cofactor is Mg(2+).

It carries out the reaction [HPr protein]-L-serine + ATP = [HPr protein]-O-phospho-L-serine + ADP + H(+). The catalysed reaction is [HPr protein]-O-phospho-L-serine + phosphate + H(+) = [HPr protein]-L-serine + diphosphate. Catalyzes the ATP- as well as the pyrophosphate-dependent phosphorylation of a specific serine residue in HPr, a phosphocarrier protein of the phosphoenolpyruvate-dependent sugar phosphotransferase system (PTS). HprK/P also catalyzes the pyrophosphate-producing, inorganic phosphate-dependent dephosphorylation (phosphorolysis) of seryl-phosphorylated HPr (P-Ser-HPr). This chain is HPr kinase/phosphorylase, found in Burkholderia ambifaria (strain ATCC BAA-244 / DSM 16087 / CCUG 44356 / LMG 19182 / AMMD) (Burkholderia cepacia (strain AMMD)).